The chain runs to 242 residues: uncharacterized protein (242 aa).

2 disordered regions span residues Ser-43–Asp-70 and Arg-112–Arg-162. The span at Gln-58–Asp-70 shows a compositional bias: polar residues. 2 stretches are compositionally biased toward low complexity: residues Glu-122 to Ala-139 and Ala-147 to Arg-162.

This is an uncharacterized protein from Homo sapiens (Human).